A 746-amino-acid chain; its full sequence is MYPWSSTGTSPFSHPDNEGAESGDMSMGEEQQQPHQRRQKFNNLRACQSCRASKVRCDQPNPGMPCLRCQKSGKPCVDAASQPGKRQRQPINSILEMESRIETILSSAELQDSAGDGETAHSTALRSPSQLSHHIQPFQHLPMGFAIPFNGGNSGTEDLNSSIRSWLNDNITDLDARTTETIFSHYLTNMVPTFPVVVFATGTTAADVRRNNPILFLAILDVASSGFCALETQRKLRKLIVQAYVHCMLRTEQYTLGLLQALIVSATWYRTIEPVEPGEQMDIYQISHTAANMALIMRLGESLNAKSWGGPMFPRREMKKGPGSAFQADSLEARRVWLGCHYICSNTSMSLRAPNIMRWTRLMDECLEVLENSPAALLSDRLLCQHIRLQHITEEFAMHLSAEEASAPAKSRAIQIQVTHRAFKRQLSEWRRTVGDGWDAHCTATSDDVPEDNAQRLTPPPPIVAIEPHAITEFMDTIDNIFRVFTSLDMSTIRALPAMYLIRIIYTFIILVKLYFAAAKLPAQDAVLQVDGLQVSRRFNRVIQMTAGWGPLWPATKLTTVFTKMRSWFESGGDNNCQRLQQAAAWLTGWELKPPSQGRDAHAMNMAEVVSDDGSIVASSSRGPASWVPSLASTDVDTLAFSHEPPLGTEFSIAPPPFRSMSCATKSCSPQAGAAEFMHDEEVPLEGQRLGDLPNIDQMDDVGMDWSQYTNMGFDLYNLDAPFLPNPPSGFDPDAAMKDNCADRNT.

The segment covering 1–12 (MYPWSSTGTSPF) has biased composition (polar residues). Positions 1–40 (MYPWSSTGTSPFSHPDNEGAESGDMSMGEEQQQPHQRRQK) are disordered. The zn(2)-C6 fungal-type DNA-binding region spans 47 to 76 (CQSCRASKVRCDQPNPGMPCLRCQKSGKPC). The tract at residues 109–131 (ELQDSAGDGETAHSTALRSPSQL) is disordered. Positions 120–131 (AHSTALRSPSQL) are enriched in polar residues.

The protein resides in the nucleus. In terms of biological role, transcription factor; part of the gene cluster that mediates the biosynthesis of the diterpene ent-pimara-8(14),15-diene (PD). Acts as a positive regulator for the cluster gene. Down-regulates the expression of the penicillin gene cluster, two putative polyketide clusters, and one putative nonribosomal peptide cluster. The protein is Transcription factor pbcR of Emericella nidulans (strain FGSC A4 / ATCC 38163 / CBS 112.46 / NRRL 194 / M139) (Aspergillus nidulans).